The following is a 130-amino-acid chain: Holo-[acyl-carrier-protein] synthase (130 aa).

2 residues coordinate Mg(2+): aspartate 9 and glutamate 58.

This sequence belongs to the P-Pant transferase superfamily. AcpS family. Requires Mg(2+) as cofactor.

The protein localises to the cytoplasm. It catalyses the reaction apo-[ACP] + CoA = holo-[ACP] + adenosine 3',5'-bisphosphate + H(+). Its function is as follows. Transfers the 4'-phosphopantetheine moiety from coenzyme A to a Ser of acyl-carrier-protein. The polypeptide is Holo-[acyl-carrier-protein] synthase (Mycolicibacterium smegmatis (strain ATCC 700084 / mc(2)155) (Mycobacterium smegmatis)).